The primary structure comprises 587 residues: Polyphenol oxidase E, chloroplastic (587 aa).

The N-terminal 87 residues, 1 to 87 (MSSSSSITTT…AANLAPLATA (87 aa)), are a transit peptide targeting the chloroplast. 2 disulfide bridges follow: Cys-98-Cys-114 and Cys-113-Cys-180. The Cu cation site is built by His-179, His-197, His-206, His-328, His-332, and His-363. Residues 183–197 (CNGAYKVGGKELQVH) constitute a cross-link (2'-(S-cysteinyl)-histidine (Cys-His)).

Belongs to the tyrosinase family. Requires Cu(2+) as cofactor.

The protein resides in the plastid. Its subcellular location is the chloroplast thylakoid lumen. It carries out the reaction 2 catechol + O2 = 2 1,2-benzoquinone + 2 H2O. Functionally, catalyzes the oxidation of mono- and o-diphenols to o-diquinones. The sequence is that of Polyphenol oxidase E, chloroplastic from Solanum lycopersicum (Tomato).